Consider the following 232-residue polypeptide: Polycomb group RING finger protein 5-B (232 aa).

An RING-type zinc finger spans residues 18–57 (CFVCKGYLIKPTTVTECLHTFCKSCIVQHFEDSNDCPKCG). The span at 93–104 (QEDEFWRRKESN) shows a compositional bias: basic and acidic residues. Positions 93 to 128 (QEDEFWRRKESNDENGPMCKKRRVDEEDDDKGDGDY) are disordered.

Component of a PRC1-like complex.

The protein resides in the nucleus. In terms of biological role, component of Polycomb group (PcG) multiprotein complexes; the complex class is required to maintain the transcriptionally repressive state of some genes. The protein is Polycomb group RING finger protein 5-B (pcgf5b) of Danio rerio (Zebrafish).